The primary structure comprises 108 residues: uncharacterized protein (108 aa).

Residues 74–108 form a disordered region; that stretch reads TGSKKRDSKANSRSRPSGTITSRGARIGLQGYKSH. Over residues 84–95 the composition is skewed to polar residues; sequence NSRSRPSGTITS.

This is an uncharacterized protein from Saccharomyces cerevisiae (strain ATCC 204508 / S288c) (Baker's yeast).